A 265-amino-acid chain; its full sequence is Hydroxyethylthiazole kinase (265 aa).

Position 43 (Met-43) interacts with substrate. Residues Lys-118 and Thr-165 each coordinate ATP. Gly-192 contacts substrate.

Belongs to the Thz kinase family. The cofactor is Mg(2+).

It catalyses the reaction 5-(2-hydroxyethyl)-4-methylthiazole + ATP = 4-methyl-5-(2-phosphooxyethyl)-thiazole + ADP + H(+). It functions in the pathway cofactor biosynthesis; thiamine diphosphate biosynthesis; 4-methyl-5-(2-phosphoethyl)-thiazole from 5-(2-hydroxyethyl)-4-methylthiazole: step 1/1. Functionally, catalyzes the phosphorylation of the hydroxyl group of 4-methyl-5-beta-hydroxyethylthiazole (THZ). This is Hydroxyethylthiazole kinase from Pyrococcus abyssi (strain GE5 / Orsay).